The primary structure comprises 286 residues: ATP synthase gamma chain (286 aa).

Belongs to the ATPase gamma chain family. In terms of assembly, F-type ATPases have 2 components, CF(1) - the catalytic core - and CF(0) - the membrane proton channel. CF(1) has five subunits: alpha(3), beta(3), gamma(1), delta(1), epsilon(1). CF(0) has three main subunits: a, b and c.

The protein resides in the cell inner membrane. Functionally, produces ATP from ADP in the presence of a proton gradient across the membrane. The gamma chain is believed to be important in regulating ATPase activity and the flow of protons through the CF(0) complex. The chain is ATP synthase gamma chain from Shewanella sp. (strain ANA-3).